The sequence spans 216 residues: Ribosomal RNA small subunit methyltransferase G (216 aa).

Residues glycine 75, leucine 80, and arginine 141 each coordinate S-adenosyl-L-methionine.

This sequence belongs to the methyltransferase superfamily. RNA methyltransferase RsmG family.

It localises to the cytoplasm. It catalyses the reaction guanosine(527) in 16S rRNA + S-adenosyl-L-methionine = N(7)-methylguanosine(527) in 16S rRNA + S-adenosyl-L-homocysteine. Specifically methylates the N7 position of guanine in position 527 of 16S rRNA. The polypeptide is Ribosomal RNA small subunit methyltransferase G (Nitrosospira multiformis (strain ATCC 25196 / NCIMB 11849 / C 71)).